A 274-amino-acid polypeptide reads, in one-letter code: Dehydration-responsive element-binding protein 2A (274 aa).

Composition is skewed to basic and acidic residues over residues 1–10 (MERGEGRRGD) and 35–50 (KWWK…ENSS). Residues 1–75 (MERGEGRRGD…KGGPENSNCA (75 aa)) form a disordered region. Positions 75–132 (AYRGVRQRTWGKWVAEIREPNRGRRLWLGSFPTALEAAHAYDEAARAMYGPTARVNFA) form a DNA-binding region, AP2/ERF.

This sequence belongs to the AP2/ERF transcription factor family. ERF subfamily.

It localises to the nucleus. Functionally, transcriptional activator that binds specifically to the DNA sequence 5'-[AG]CCGAC-3'. Binding to the C-repeat/DRE element mediates high salinity- and dehydration-inducible transcription. This chain is Dehydration-responsive element-binding protein 2A (DREB2A), found in Oryza sativa subsp. indica (Rice).